A 688-amino-acid chain; its full sequence is MFKKLFGQLQRIGKALMLPVAILPAAGILLAFGNAMHNEQLVEIAPWLKNDIIVMISSVMEASGQVVFDNLPLLFAVGTALGLAGGDGVAALAALVGYLIMNATMGKVLHITIDDIFSYAKGAKELSQAAKEPAHALVLGIPTLQTGVFGGIIMGALAAWCYNKFYNITLPPFLGFFAGKRFVPIVTSVVAIATGVVLSFAWPPIQDGLNSLSNFLLNKNLTLTTFIFGIIERSLIPFGLHHIFYSPFWFEFGSYTNHAGELVRGDQRIWMAQLRDGVPFTAGAFTTGKYPFMMFGLPAAAFAIYKNARPERKKVVGGLMLSAGLTAFLTGITEPLEFSFLFVAPVLYGIHVLLAGTSFLVMHLLGVKIGMTFSGGFIDYILYGLLNWDRSHALLVIPVGIVYAIVYYFLFDFAIRKFKLKTPGREDEETEIRNSSVAKLPFDVLDAMGGKENIKHLDACITRLRVEVVDKSKVDVAGIKALGASGVLEVGNNMQAIFGPKSDQIKHDMAKIMSGEITKPSETTVTEEMSDEPVHVEALGTTDIYAPGVGQIIPLSEVPDQVFAGKMMGDGVGFIPEKGEIVAPFDGTVKTIFPTKHAIGLESGSGVEVLIHIGIDTVKLNGEGFESLINVDEKVTQGQPLMKVNLAYLKAHAPSIVTPMIITNLENKELVIEDVQDADPGKLIMTVK.

Residues 3–427 enclose the PTS EIIC type-1 domain; that stretch reads KKLFGQLQRI…FKLKTPGRED (425 aa). Helical transmembrane passes span 12–32, 81–101, 137–157, 182–202, 223–243, 284–304, 315–335, 340–360, 364–384, and 395–415; these read IGKA…LLAF, LGLA…YLIM, LVLG…MGAL, FVPI…SFAW, LTTF…LHHI, AFTT…AFAI, VVGG…ITEP, FLFV…TSFL, LLGV…ILYG, and LVIP…DFAI. The region spanning 438 to 519 is the PTS EIIB type-1 domain; sequence AKLPFDVLDA…AKIMSGEITK (82 aa). Residue C460 is the Phosphocysteine intermediate; for EIIB activity of the active site. Residues 560–664 enclose the PTS EIIA type-1 domain; sequence DQVFAGKMMG…SIVTPMIITN (105 aa). Residue H612 is the Tele-phosphohistidine intermediate; for EIIA activity of the active site.

It localises to the cell membrane. Functionally, the phosphoenolpyruvate-dependent sugar phosphotransferase system (sugar PTS), a major carbohydrate active -transport system, catalyzes the phosphorylation of incoming sugar substrates concomitantly with their translocation across the cell membrane. This system is involved in alpha- and beta-glucoside transport. This chain is PTS system glucoside-specific EIICBA component (glcB), found in Staphylococcus aureus (strain bovine RF122 / ET3-1).